Consider the following 174-residue polypeptide: uncharacterized protein (174 aa).

This is an uncharacterized protein from Bacillus subtilis (strain 168).